The following is a 146-amino-acid chain: SMR1 protein (146 aa).

The signal sequence occupies residues 1–22; sequence MKSLYLIFGLWILLACFQSGEG. 2 disordered regions span residues 23–43 and 99–146; these read VRGP…TLPH and TAPD…GGGK. Over residues 109–139 the composition is skewed to polar residues; sequence PPTQLHSTEQANTKTDAKISNTTATTQNSTD. N-linked (GlcNAc...) asparagine glycans are attached at residues asparagine 129 and asparagine 136.

Post-translationally, several O-linked glycosylation sites might be present in the C-terminal part. In terms of tissue distribution, expressed predominantly in the acinar cells of the submandibular gland and to lesser extent in the prostate.

The protein localises to the secreted. In terms of biological role, sialorphin may be involved in the modulation of mineral balance between at least four systems: kidney, bone, tooth and circulation. Functionally, submandibular gland peptide T is able to directly or indirectly down-regulate cardiovascular depression induced by septic shock (endotoxin stimuli), or anaphylactic challenge (nematode antigen sensitization). Its function is as follows. Sialorphin is an endogenous inhibitor of neprilysin. Inhibits the breakdown of Met-enkephalin and substance P in isolated tissue from the dorsal zone of the rat spinal cord. Has an analgesic effect when administered to rats by intravenous injection. This is SMR1 protein (Vcsa1) from Rattus norvegicus (Rat).